The chain runs to 155 residues: Small ribosomal subunit protein uS7 (155 aa).

The protein belongs to the universal ribosomal protein uS7 family. As to quaternary structure, part of the 30S ribosomal subunit. Contacts proteins S9 and S11.

One of the primary rRNA binding proteins, it binds directly to 16S rRNA where it nucleates assembly of the head domain of the 30S subunit. Is located at the subunit interface close to the decoding center, probably blocks exit of the E-site tRNA. In Nautilia profundicola (strain ATCC BAA-1463 / DSM 18972 / AmH), this protein is Small ribosomal subunit protein uS7.